A 302-amino-acid chain; its full sequence is Methionyl-tRNA formyltransferase (302 aa).

A (6S)-5,6,7,8-tetrahydrofolate-binding site is contributed by 109-112 (SILP).

Belongs to the Fmt family.

It carries out the reaction L-methionyl-tRNA(fMet) + (6R)-10-formyltetrahydrofolate = N-formyl-L-methionyl-tRNA(fMet) + (6S)-5,6,7,8-tetrahydrofolate + H(+). In terms of biological role, attaches a formyl group to the free amino group of methionyl-tRNA(fMet). The formyl group appears to play a dual role in the initiator identity of N-formylmethionyl-tRNA by promoting its recognition by IF2 and preventing the misappropriation of this tRNA by the elongation apparatus. This is Methionyl-tRNA formyltransferase from Campylobacter hominis (strain ATCC BAA-381 / DSM 21671 / CCUG 45161 / LMG 19568 / NCTC 13146 / CH001A).